The following is a 235-amino-acid chain: Orotidine 5'-phosphate decarboxylase (235 aa).

Residues D10, K33, 60 to 69 (DLKMSDIPNT), T123, R185, Q194, G214, and R215 each bind substrate. K62 (proton donor) is an active-site residue.

Belongs to the OMP decarboxylase family. Type 1 subfamily. Homodimer.

It catalyses the reaction orotidine 5'-phosphate + H(+) = UMP + CO2. It participates in pyrimidine metabolism; UMP biosynthesis via de novo pathway; UMP from orotate: step 2/2. Its function is as follows. Catalyzes the decarboxylation of orotidine 5'-monophosphate (OMP) to uridine 5'-monophosphate (UMP). The sequence is that of Orotidine 5'-phosphate decarboxylase from Lactobacillus gasseri (strain ATCC 33323 / DSM 20243 / BCRC 14619 / CIP 102991 / JCM 1131 / KCTC 3163 / NCIMB 11718 / NCTC 13722 / AM63).